We begin with the raw amino-acid sequence, 775 residues long: 5-methyltetrahydropteroyltriglutamate--homocysteine methyltransferase (775 aa).

5-methyltetrahydropteroyltri-L-glutamate-binding positions include 16–19 (REMK) and Lys-115. L-homocysteine is bound by residues 435 to 437 (IGS) and Glu-488. Residues 435-437 (IGS) and Glu-488 contribute to the L-methionine site. 5-methyltetrahydropteroyltri-L-glutamate-binding positions include 519–520 (RC) and Trp-565. Asp-603 is an L-homocysteine binding site. Asp-603 provides a ligand contact to L-methionine. Residue Glu-609 coordinates 5-methyltetrahydropteroyltri-L-glutamate. Zn(2+) contacts are provided by His-645, Cys-647, and Glu-669. The active-site Proton donor is His-698. Zn(2+) is bound at residue Cys-730.

Belongs to the vitamin-B12 independent methionine synthase family. It depends on Zn(2+) as a cofactor.

The enzyme catalyses 5-methyltetrahydropteroyltri-L-glutamate + L-homocysteine = tetrahydropteroyltri-L-glutamate + L-methionine. Its pathway is amino-acid biosynthesis; L-methionine biosynthesis via de novo pathway; L-methionine from L-homocysteine (MetE route): step 1/1. Functionally, catalyzes the transfer of a methyl group from 5-methyltetrahydrofolate to homocysteine resulting in methionine formation. The polypeptide is 5-methyltetrahydropteroyltriglutamate--homocysteine methyltransferase (Coxiella burnetii (strain CbuG_Q212) (Coxiella burnetii (strain Q212))).